We begin with the raw amino-acid sequence, 1593 residues long: Laminin subunit gamma-1 (1593 aa).

An N-terminal signal peptide occupies residues 1–19 (MSLFSCLLLWTLWAACSHG). The 240-residue stretch at 30–269 (RPQRCMPEFV…AISDFAVGGR (240 aa)) folds into the Laminin N-terminal domain. 2 N-linked (GlcNAc...) asparagine glycosylation sites follow: asparagine 44 and asparagine 118. Cystine bridges form between cysteine 270–cysteine 279, cysteine 272–cysteine 289, cysteine 291–cysteine 300, cysteine 303–cysteine 323, cysteine 326–cysteine 335, cysteine 328–cysteine 351, cysteine 354–cysteine 363, cysteine 366–cysteine 379, cysteine 382–cysteine 394, cysteine 384–cysteine 400, cysteine 402–cysteine 411, cysteine 414–cysteine 426, cysteine 429–cysteine 440, cysteine 431–cysteine 447, cysteine 449–cysteine 458, and cysteine 461–cysteine 476. 4 Laminin EGF-like domains span residues 270–325 (CKCN…ECLP), 326–381 (CNCN…RCLS), 382–428 (CGCN…GCRP), and 429–478 (CSCN…GCTP). Residues 505–673 (RDDEGWKGKQ…PGTPARWVEK (169 aa)) enclose the Laminin IV type A domain. N-linked (GlcNAc...) asparagine glycans are attached at residues asparagine 560, asparagine 634, and asparagine 654. Disulfide bonds link cysteine 708–cysteine 717, cysteine 710–cysteine 724, cysteine 726–cysteine 735, cysteine 738–cysteine 754, cysteine 757–cysteine 765, cysteine 759–cysteine 776, cysteine 779–cysteine 788, cysteine 791–cysteine 809, cysteine 812–cysteine 826, cysteine 814–cysteine 833, cysteine 836–cysteine 845, cysteine 848–cysteine 865, cysteine 868–cysteine 882, cysteine 870–cysteine 889, cysteine 891–cysteine 900, cysteine 903–cysteine 916, cysteine 919–cysteine 931, cysteine 921–cysteine 938, cysteine 940–cysteine 949, cysteine 952–cysteine 964, cysteine 967–cysteine 979, cysteine 969–cysteine 985, cysteine 987–cysteine 996, and cysteine 999–cysteine 1012. Laminin EGF-like domains are found at residues 708–756 (CNCN…DCKA), 757–811 (CPCP…ACRA), 812–867 (CSCN…KCKP), 868–918 (CKCS…GCER), 919–966 (CNCN…GCKP), and 967–1014 (CDCD…GCQQ). 8 N-linked (GlcNAc...) asparagine glycosylation sites follow: asparagine 1006, asparagine 1091, asparagine 1159, asparagine 1189, asparagine 1207, asparagine 1254, asparagine 1364, and asparagine 1379. The interval 1014–1593 (QCPNCYSLVR…CFNTPSLERP (580 aa)) is domain II and I. Residues 1021-1580 (LVRDKVNQQR…ANLNDIKNTL (560 aa)) adopt a coiled-coil conformation.

As to quaternary structure, laminin is a complex glycoprotein, consisting of three different polypeptide chains (alpha, beta, gamma), which are bound to each other by disulfide bonds into a cross-shaped molecule comprising one long and three short arms with globules at each end.

The protein resides in the secreted. It is found in the extracellular space. The protein localises to the extracellular matrix. It localises to the basement membrane. Functionally, binding to cells via a high affinity receptor, laminin is thought to mediate the attachment, migration and organization of cells into tissues during embryonic development by interacting with other extracellular matrix components. The chain is Laminin subunit gamma-1 (lamc1) from Danio rerio (Zebrafish).